The following is a 313-amino-acid chain: ADP-L-glycero-D-manno-heptose-6-epimerase (313 aa).

Residues 10-11, 31-32, Lys38, Arg53, 75-79, and Asn92 contribute to the NADP(+) site; these read MI, DN, and EGACS. Tyr139 serves as the catalytic Proton acceptor. NADP(+) is bound at residue Lys143. Residue Asn174 participates in substrate binding. Residues Val175 and Lys183 each contribute to the NADP(+) site. Lys183 serves as the catalytic Proton acceptor. Substrate is bound by residues Ser185, His192, 206–209, Arg214, and Tyr277; that span reads FAGS.

It belongs to the NAD(P)-dependent epimerase/dehydratase family. HldD subfamily. In terms of assembly, homopentamer. It depends on NADP(+) as a cofactor.

It carries out the reaction ADP-D-glycero-beta-D-manno-heptose = ADP-L-glycero-beta-D-manno-heptose. Its pathway is nucleotide-sugar biosynthesis; ADP-L-glycero-beta-D-manno-heptose biosynthesis; ADP-L-glycero-beta-D-manno-heptose from D-glycero-beta-D-manno-heptose 7-phosphate: step 4/4. It participates in bacterial outer membrane biogenesis; LPS core biosynthesis. Catalyzes the interconversion between ADP-D-glycero-beta-D-manno-heptose and ADP-L-glycero-beta-D-manno-heptose via an epimerization at carbon 6 of the heptose. This is ADP-L-glycero-D-manno-heptose-6-epimerase from Vibrio vulnificus (strain YJ016).